We begin with the raw amino-acid sequence, 515 residues long: Maturase K (515 aa).

This sequence belongs to the intron maturase 2 family. MatK subfamily.

It localises to the plastid. The protein resides in the chloroplast. In terms of biological role, usually encoded in the trnK tRNA gene intron. Probably assists in splicing its own and other chloroplast group II introns. This chain is Maturase K, found in Cedrus deodara (Deodar cedar).